The sequence spans 905 residues: DNA mismatch repair protein MutS (905 aa).

Residues 389–410 (ERPANPEGTYPTDAETSGDTLP) form a disordered region. Position 638-645 (638-645 (GPNMAGKS)) interacts with ATP. The disordered stretch occupies residues 826 to 847 (RDAARGTNSAPSRQTLPGLDLP). Over residues 831–840 (GTNSAPSRQT) the composition is skewed to polar residues.

The protein belongs to the DNA mismatch repair MutS family.

This protein is involved in the repair of mismatches in DNA. It is possible that it carries out the mismatch recognition step. This protein has a weak ATPase activity. This is DNA mismatch repair protein MutS from Nitratidesulfovibrio vulgaris (strain ATCC 29579 / DSM 644 / CCUG 34227 / NCIMB 8303 / VKM B-1760 / Hildenborough) (Desulfovibrio vulgaris).